The following is a 565-amino-acid chain: NAD-dependent malic enzyme (565 aa).

The active-site Proton donor is Tyr104. Arg157 contacts NAD(+). Catalysis depends on Lys175, which acts as the Proton acceptor. A divalent metal cation contacts are provided by Glu246, Asp247, and Asp270. NAD(+) contacts are provided by Asp270 and Asn418.

It belongs to the malic enzymes family. In terms of assembly, homotetramer. Requires Mg(2+) as cofactor. Mn(2+) is required as a cofactor.

It catalyses the reaction (S)-malate + NAD(+) = pyruvate + CO2 + NADH. It carries out the reaction oxaloacetate + H(+) = pyruvate + CO2. This chain is NAD-dependent malic enzyme, found in Shigella boydii serotype 18 (strain CDC 3083-94 / BS512).